The sequence spans 80 residues: Protein FAM229B (80 aa).

The tract at residues 1–45 is disordered; it reads MPFRFGTQPRRFPVEGGDSSIELESGLSSSASCNGKETSPNRQLR. Residues 15 to 32 are compositionally biased toward low complexity; it reads EGGDSSIELESGLSSSAS. Residues 33–42 show a composition bias toward polar residues; the sequence is CNGKETSPNR.

Belongs to the FAM229 family.

This Rattus norvegicus (Rat) protein is Protein FAM229B (Fam229b).